The chain runs to 210 residues: Probable nicotinate-nucleotide adenylyltransferase (210 aa).

The protein belongs to the NadD family.

It carries out the reaction nicotinate beta-D-ribonucleotide + ATP + H(+) = deamido-NAD(+) + diphosphate. It participates in cofactor biosynthesis; NAD(+) biosynthesis; deamido-NAD(+) from nicotinate D-ribonucleotide: step 1/1. Functionally, catalyzes the reversible adenylation of nicotinate mononucleotide (NaMN) to nicotinic acid adenine dinucleotide (NaAD). The sequence is that of Probable nicotinate-nucleotide adenylyltransferase from Streptococcus pyogenes serotype M6 (strain ATCC BAA-946 / MGAS10394).